Reading from the N-terminus, the 318-residue chain is Isoeugenol synthase 1 (318 aa).

NADP(+) contacts are provided by residues 10 to 13, 32 to 43, arginine 33, 84 to 86, 109 to 111, lysine 131, and 151 to 153; these read TGYI, ARPLTPDSTPSS, VPM, SEF, and NCF. Lysine 131 serves as the catalytic Proton donor/acceptor. Proline 260 serves as a coordination point for substrate.

This sequence belongs to the NmrA-type oxidoreductase family. As to expression, mostly expressed in petals, and, to a lower extent, in sepals, stamens and pistils.

The enzyme catalyses (E)-isoeugenol + acetate + NADP(+) = (E)-coniferyl acetate + NADPH. It functions in the pathway aromatic compound metabolism; phenylpropanoid biosynthesis. In terms of biological role, catalyzes the synthesis of the phenylpropene isoeugenol from coniferyl acetate. Phenylpropenes are the primary constituents of various essential plant oils. They are produced as antimicrobial and antianimal compounds, or as floral attractants of pollinators. Isoeugenol is a characteristic aromatic constituent of spices and a floral volatile compound. The sequence is that of Isoeugenol synthase 1 from Clarkia breweri (Fairy fans).